We begin with the raw amino-acid sequence, 740 residues long: Probable apyrase 7 (740 aa).

Residues 1 to 113 (MVFGRITELF…PSTRRKLIRA (113 aa)) lie on the Cytoplasmic side of the membrane. A helical membrane pass occupies residues 114-134 (VMIVMCLFLFAFLVYIVSMYI). Residues 135–581 (YTNWSRGASR…LKSYETLSMK (447 aa)) lie on the Extracellular side of the membrane. Asn-137 carries an N-linked (GlcNAc...) asparagine glycan. ATP is bound at residue 147–157 (VVFDCGSTGTR). Asn-208 carries N-linked (GlcNAc...) asparagine glycosylation. The Proton acceptor role is filled by Glu-284. 309 to 319 (GALDLGGSSLQ) contributes to the ATP binding site. 4 N-linked (GlcNAc...) asparagine glycosylation sites follow: Asn-330, Asn-374, Asn-439, and Asn-484. Residues 582–602 (INPIALISILILSLLLLLCAL) form a helical membrane-spanning segment. The Cytoplasmic portion of the chain corresponds to 603 to 740 (SRVSNCLPRF…SLADSHMLKM (138 aa)). The tract at residues 706–740 (FWSSPRRSQMRLQSRRSQSREDLSSSLADSHMLKM) is disordered. Residues 708-721 (SSPRRSQMRLQSRR) show a composition bias toward low complexity.

The protein belongs to the GDA1/CD39 NTPase family. Ca(2+) serves as cofactor. In terms of tissue distribution, detected in mature pollen grains. Also expressed in more diverse tissues such as roots, leaves, stems, pistils and sepals. More particularly expressed in the vascular bundle.

The protein localises to the membrane. It carries out the reaction a ribonucleoside 5'-triphosphate + 2 H2O = a ribonucleoside 5'-phosphate + 2 phosphate + 2 H(+). Its function is as follows. Catalyzes the hydrolysis of phosphoanhydride bonds of nucleoside tri- and di-phosphates. Involved in the regulation of pollen and anther development. In Arabidopsis thaliana (Mouse-ear cress), this protein is Probable apyrase 7 (APY7).